A 254-amino-acid chain; its full sequence is Thiazole synthase (254 aa).

Catalysis depends on Lys95, which acts as the Schiff-base intermediate with DXP. 1-deoxy-D-xylulose 5-phosphate-binding positions include Gly156, 182-183 (AG), and 204-205 (NT).

This sequence belongs to the ThiG family. As to quaternary structure, homotetramer. Forms heterodimers with either ThiH or ThiS.

The protein resides in the cytoplasm. It catalyses the reaction [ThiS sulfur-carrier protein]-C-terminal-Gly-aminoethanethioate + 2-iminoacetate + 1-deoxy-D-xylulose 5-phosphate = [ThiS sulfur-carrier protein]-C-terminal Gly-Gly + 2-[(2R,5Z)-2-carboxy-4-methylthiazol-5(2H)-ylidene]ethyl phosphate + 2 H2O + H(+). It functions in the pathway cofactor biosynthesis; thiamine diphosphate biosynthesis. Its function is as follows. Catalyzes the rearrangement of 1-deoxy-D-xylulose 5-phosphate (DXP) to produce the thiazole phosphate moiety of thiamine. Sulfur is provided by the thiocarboxylate moiety of the carrier protein ThiS. In vitro, sulfur can be provided by H(2)S. The sequence is that of Thiazole synthase from Shewanella sp. (strain W3-18-1).